The following is a 149-amino-acid chain: Large ribosomal subunit protein uL13 (149 aa).

This sequence belongs to the universal ribosomal protein uL13 family. Part of the 50S ribosomal subunit.

This protein is one of the early assembly proteins of the 50S ribosomal subunit, although it is not seen to bind rRNA by itself. It is important during the early stages of 50S assembly. This chain is Large ribosomal subunit protein uL13, found in Cyanothece sp. (strain PCC 7425 / ATCC 29141).